A 263-amino-acid polypeptide reads, in one-letter code: MVAAVARLWWRGLLGASALTRGAGRPSVLLLPVRRESAGADTRPTVRPRNDVAHQQLSAFGEYVAEILPKYVQQVQVSCFNELEVCIHPDGVIPVLTFLRDHTNAQFKSLVDLTAVDVPTRQNRFEIVYNLLSLRFNSRIRVKTYTDELTPIESAVSVFKAANWYEREIWDMFGVFFANHPDLRRILTDYGFEGHPFRKDFPLSGYVELRYDDEVKRVVAEPVELAQEFRKFDLNSPWEAFPVYRQPPESLKLEAGDKKPDAK.

The transit peptide at Met-1–Arg-35 directs the protein to the mitochondrion.

This sequence belongs to the complex I 30 kDa subunit family. Core subunit of respiratory chain NADH dehydrogenase (Complex I) which is composed of 45 different subunits. Interacts with NDUFAF3. Interacts with RAB5IF. Found in subcomplexes containing subunits NDUFS2, MT-ND1 and NDUFA13.

Its subcellular location is the mitochondrion inner membrane. The catalysed reaction is a ubiquinone + NADH + 5 H(+)(in) = a ubiquinol + NAD(+) + 4 H(+)(out). Its function is as follows. Core subunit of the mitochondrial membrane respiratory chain NADH dehydrogenase (Complex I) which catalyzes electron transfer from NADH through the respiratory chain, using ubiquinone as an electron acceptor. Essential for the catalytic activity and assembly of complex I. This chain is NADH dehydrogenase [ubiquinone] iron-sulfur protein 3, mitochondrial (NDUFS3), found in Pongo pygmaeus (Bornean orangutan).